The sequence spans 220 residues: LOB domain-containing protein 31 (220 aa).

In terms of domain architecture, LOB spans 10-112; the sequence is GPCGACKFLR…AELAYVQTQL (103 aa). Residues 117-172 are disordered; it reads GLPPPNSQNNSRTEAASSSNVPLISSVDSKDNMSSSSSHIPCMSQQQEQEQPKEAI. Over residues 123 to 139 the composition is skewed to polar residues; that stretch reads SQNNSRTEAASSSNVPL.

It belongs to the LOB domain-containing protein family. Expressed in roots, stems and flowers.

The chain is LOB domain-containing protein 31 (LBD31) from Arabidopsis thaliana (Mouse-ear cress).